Here is a 505-residue protein sequence, read N- to C-terminus: Activin receptor type-1B (505 aa).

The signal sequence occupies residues methionine 1–glycine 23. The Extracellular segment spans residues serine 24–glutamate 126. The N-linked (GlcNAc...) asparagine glycan is linked to asparagine 43. The helical transmembrane segment at leucine 127–isoleucine 149 threads the bilayer. Residues asparagine 150–isoleucine 505 lie on the Cytoplasmic side of the membrane. Residues lysine 177–threonine 206 enclose the GS domain. One can recognise a Protein kinase domain in the interval isoleucine 207–leucine 497. ATP contacts are provided by residues isoleucine 213–valine 221 and lysine 234. Catalysis depends on aspartate 335, which acts as the Proton acceptor. Residue tyrosine 380 is modified to Phosphotyrosine.

Belongs to the protein kinase superfamily. TKL Ser/Thr protein kinase family. TGFB receptor subfamily. As to quaternary structure, forms an activin receptor complex with activin receptor type-2 (ACVR2A or ACVR2B). Part of a complex consisting of MAGI2/ARIP1, ACVR2A, ACVR1B and SMAD3. Interacts with SMAD2 and SMAD3. Interacts with SMAD7. Interacts with FKBP1A. Interacts with IGSF1. Interacts with CRIPTO. Interacts with TDP2. Interacts with TSC22D1/TSC-22. Mg(2+) is required as a cofactor. The cofactor is Mn(2+). In terms of processing, autophosphorylated. Phosphorylated by activin receptor type-2 (ACVR2A or ACVR2B) in response to activin-binding at serine and threonine residues in the GS domain. Phosphorylation of ACVR1B by activin receptor type-2 regulates association with SMAD7. Ubiquitinated. Level of ubiquitination is regulated by the SMAD7-SMURF1 complex. Post-translationally, ubiquitinated. In terms of tissue distribution, urogenital ridge, testis, ovary, brain and lungs.

Its subcellular location is the cell membrane. It catalyses the reaction L-threonyl-[receptor-protein] + ATP = O-phospho-L-threonyl-[receptor-protein] + ADP + H(+). The catalysed reaction is L-seryl-[receptor-protein] + ATP = O-phospho-L-seryl-[receptor-protein] + ADP + H(+). Activin receptor type-2 (ACVR2A or ACVR2B) activates the type-1 receptor through phosphorylation of its regulatory GS domain. Its function is as follows. Transmembrane serine/threonine kinase activin type-1 receptor forming an activin receptor complex with activin receptor type-2 (ACVR2A or ACVR2B). Transduces the activin signal from the cell surface to the cytoplasm and is thus regulating a many physiological and pathological processes including neuronal differentiation and neuronal survival, hair follicle development and cycling, FSH production by the pituitary gland, wound healing, extracellular matrix production, immunosuppression and carcinogenesis. Activin is also thought to have a paracrine or autocrine role in follicular development in the ovary. Within the receptor complex, type-2 receptors (ACVR2A and/or ACVR2B) act as a primary activin receptors whereas the type-1 receptors like ACVR1B act as downstream transducers of activin signals. Activin binds to type-2 receptor at the plasma membrane and activates its serine-threonine kinase. The activated receptor type-2 then phosphorylates and activates the type-1 receptor such as ACVR1B. Once activated, the type-1 receptor binds and phosphorylates the SMAD proteins SMAD2 and SMAD3, on serine residues of the C-terminal tail. Soon after their association with the activin receptor and subsequent phosphorylation, SMAD2 and SMAD3 are released into the cytoplasm where they interact with the common partner SMAD4. This SMAD complex translocates into the nucleus where it mediates activin-induced transcription. Inhibitory SMAD7, which is recruited to ACVR1B through FKBP1A, can prevent the association of SMAD2 and SMAD3 with the activin receptor complex, thereby blocking the activin signal. Activin signal transduction is also antagonized by the binding to the receptor of inhibin-B via the IGSF1 inhibin coreceptor. ACVR1B also phosphorylates TDP2. This Rattus norvegicus (Rat) protein is Activin receptor type-1B (Acvr1b).